The sequence spans 430 residues: MSSVVVVGTQWGDEGKGKITDFLSENAEVIARYQGGDNAGHTIKFDGVTYKLHLIPSGIFYKEKISVIGNGVVVNPKSLVKELAYLKENNVATDNLRISDRAHVILPYHIKLDQLQEDAKGENKIGTTIKGIGPAYMDKAARVGIRIADLLDKEIFAERLQINLEEKNRQFVKMFDSEAIEFDDIFEEYYEYGQQIKQYVTDTSVILNDALDAGKRVLFEGAQGVMLDIDQGTYPFVTSSNPVAGGVTIGSGVGPSKINKVVGVCKAYTSRVGDGPFPTELFDETGETIRRVGKEYGTTTGRPRRVGWFDSVVMRHSKRVSGITNLSLNSIDVLSGLETVKICTAYELDGELIYHYPASLKELSRCKPVYEELPGWSEDITGCKTLADLPANARNYVHRISELVGVRISTFSVGPDRNQTNVLESVWAQI.

GTP contacts are provided by residues 12 to 18 and 40 to 42; these read GDEGKGK and GHT. The Proton acceptor role is filled by aspartate 13. Aspartate 13 and glycine 40 together coordinate Mg(2+). Residues 13-16, 38-41, threonine 128, arginine 142, glutamine 223, threonine 238, and arginine 302 contribute to the IMP site; these read DEGK and NAGH. Catalysis depends on histidine 41, which acts as the Proton donor. Residue 298–304 participates in substrate binding; that stretch reads TTTGRPR. Residues arginine 304, 330–332, and 412–414 each bind GTP; these read SID and SVG.

The protein belongs to the adenylosuccinate synthetase family. In terms of assembly, homodimer. Mg(2+) serves as cofactor.

Its subcellular location is the cytoplasm. The enzyme catalyses IMP + L-aspartate + GTP = N(6)-(1,2-dicarboxyethyl)-AMP + GDP + phosphate + 2 H(+). It participates in purine metabolism; AMP biosynthesis via de novo pathway; AMP from IMP: step 1/2. Functionally, plays an important role in the de novo pathway of purine nucleotide biosynthesis. Catalyzes the first committed step in the biosynthesis of AMP from IMP. The chain is Adenylosuccinate synthetase from Enterococcus faecalis (strain ATCC 700802 / V583).